The primary structure comprises 122 residues: Large ribosomal subunit protein uL14 (122 aa).

Belongs to the universal ribosomal protein uL14 family. In terms of assembly, part of the 50S ribosomal subunit. Forms a cluster with proteins L3 and L19. In the 70S ribosome, L14 and L19 interact and together make contacts with the 16S rRNA in bridges B5 and B8.

Functionally, binds to 23S rRNA. Forms part of two intersubunit bridges in the 70S ribosome. The chain is Large ribosomal subunit protein uL14 from Ligilactobacillus salivarius (strain UCC118) (Lactobacillus salivarius).